Here is a 314-residue protein sequence, read N- to C-terminus: Homoserine kinase (314 aa).

95–105 (PHSRGLGSSAS) provides a ligand contact to ATP.

It belongs to the GHMP kinase family. Homoserine kinase subfamily.

Its subcellular location is the cytoplasm. The enzyme catalyses L-homoserine + ATP = O-phospho-L-homoserine + ADP + H(+). It functions in the pathway amino-acid biosynthesis; L-threonine biosynthesis; L-threonine from L-aspartate: step 4/5. Catalyzes the ATP-dependent phosphorylation of L-homoserine to L-homoserine phosphate. The polypeptide is Homoserine kinase (Mycobacterium ulcerans (strain Agy99)).